Here is a 327-residue protein sequence, read N- to C-terminus: Mitochondrial thiamine pyrophosphate carrier 1 (327 aa).

3 Solcar repeats span residues 13–114 (GSKL…AAQL), 126–214 (PAAA…LRAP), and 222–317 (FWGG…VLRA). 6 consecutive transmembrane segments (helical) span residues 16 to 36 (LQVVVAGATAGMIARFVIAPL), 95 to 111 (LLYITYSAVQFATYRSA), 132 to 152 (FVAGAAAGVTSTTVTYPLDLL), 189 to 209 (GIGPAVGQTFPFMGIFFAAYE), 223 to 245 (WGGQLALASMTASTLAKTAVFPL), and 292 to 309 (GLTVSLIKSAPASAVTMW).

This sequence belongs to the mitochondrial carrier (TC 2.A.29) family.

The protein localises to the mitochondrion inner membrane. Functionally, mitochondrial transporter that mediates uptake of thiamine pyrophosphate (ThPP) into mitochondria. The chain is Mitochondrial thiamine pyrophosphate carrier 1 (TPC1) from Pyricularia oryzae (strain 70-15 / ATCC MYA-4617 / FGSC 8958) (Rice blast fungus).